Reading from the N-terminus, the 156-residue chain is Small ribosomal subunit protein uS7 (156 aa).

This sequence belongs to the universal ribosomal protein uS7 family. In terms of assembly, part of the 30S ribosomal subunit. Contacts proteins S9 and S11.

Its function is as follows. One of the primary rRNA binding proteins, it binds directly to 16S rRNA where it nucleates assembly of the head domain of the 30S subunit. Is located at the subunit interface close to the decoding center, probably blocks exit of the E-site tRNA. The chain is Small ribosomal subunit protein uS7 from Paracoccus denitrificans (strain Pd 1222).